The sequence spans 559 residues: Formate--tetrahydrofolate ligase (559 aa).

Residue Thr-68–Thr-75 coordinates ATP.

Belongs to the formate--tetrahydrofolate ligase family. Homotetramer.

The catalysed reaction is (6S)-5,6,7,8-tetrahydrofolate + formate + ATP = (6R)-10-formyltetrahydrofolate + ADP + phosphate. Its pathway is one-carbon metabolism; tetrahydrofolate interconversion. The protein is Formate--tetrahydrofolate ligase of Moorella thermoacetica (Clostridium thermoaceticum).